A 414-amino-acid polypeptide reads, in one-letter code: Glutamyl-tRNA reductase (414 aa).

Residues 51 to 54, S107, 112 to 114, and Q118 contribute to the substrate site; these read TCNR and EYE. The Nucleophile role is filled by C52. 187–192 provides a ligand contact to NADP(+); that stretch reads GAGEIG.

It belongs to the glutamyl-tRNA reductase family. Homodimer.

The catalysed reaction is (S)-4-amino-5-oxopentanoate + tRNA(Glu) + NADP(+) = L-glutamyl-tRNA(Glu) + NADPH + H(+). It functions in the pathway porphyrin-containing compound metabolism; protoporphyrin-IX biosynthesis; 5-aminolevulinate from L-glutamyl-tRNA(Glu): step 1/2. In terms of biological role, catalyzes the NADPH-dependent reduction of glutamyl-tRNA(Glu) to glutamate 1-semialdehyde (GSA). This is Glutamyl-tRNA reductase from Sulfolobus acidocaldarius (strain ATCC 33909 / DSM 639 / JCM 8929 / NBRC 15157 / NCIMB 11770).